The sequence spans 150 residues: Large ribosomal subunit protein uL13 (150 aa).

The tract at residues 130–150 (EHPHSAQNPQVLSITTNELVK) is disordered. Polar residues predominate over residues 134–150 (SAQNPQVLSITTNELVK).

Belongs to the universal ribosomal protein uL13 family. As to quaternary structure, part of the 50S ribosomal subunit.

In terms of biological role, this protein is one of the early assembly proteins of the 50S ribosomal subunit, although it is not seen to bind rRNA by itself. It is important during the early stages of 50S assembly. This Prochlorococcus marinus (strain SARG / CCMP1375 / SS120) protein is Large ribosomal subunit protein uL13.